The following is a 1054-amino-acid chain: Bifunctional glutamine synthetase adenylyltransferase/adenylyl-removing enzyme (1054 aa).

Residues Met1–Leu535 form an adenylyl removase region. 2 stretches are compositionally biased toward polar residues: residues Ser138 to Asp150 and Asp165 to Gly175. The disordered stretch occupies residues Ser138–Gly175. The tract at residues Asn541–Tyr1054 is adenylyl transferase.

This sequence belongs to the GlnE family. The cofactor is Mg(2+).

It carries out the reaction [glutamine synthetase]-O(4)-(5'-adenylyl)-L-tyrosine + phosphate = [glutamine synthetase]-L-tyrosine + ADP. It catalyses the reaction [glutamine synthetase]-L-tyrosine + ATP = [glutamine synthetase]-O(4)-(5'-adenylyl)-L-tyrosine + diphosphate. In terms of biological role, involved in the regulation of glutamine synthetase GlnA, a key enzyme in the process to assimilate ammonia. When cellular nitrogen levels are high, the C-terminal adenylyl transferase (AT) inactivates GlnA by covalent transfer of an adenylyl group from ATP to specific tyrosine residue of GlnA, thus reducing its activity. Conversely, when nitrogen levels are low, the N-terminal adenylyl removase (AR) activates GlnA by removing the adenylyl group by phosphorolysis, increasing its activity. The regulatory region of GlnE binds the signal transduction protein PII (GlnB) which indicates the nitrogen status of the cell. In Corynebacterium diphtheriae (strain ATCC 700971 / NCTC 13129 / Biotype gravis), this protein is Bifunctional glutamine synthetase adenylyltransferase/adenylyl-removing enzyme.